Here is a 685-residue protein sequence, read N- to C-terminus: Probable transcriptional regulator SLK3 (685 aa).

2 disordered regions span residues 25-66 (NLPG…ENSY) and 108-129 (LQQQ…SQRL). A compositionally biased stretch (low complexity) spans 39 to 56 (QHLPQQQQRQLLEQQAGQ). The segment at 176–423 (PAENCITYWR…EHKVGPLEGL (248 aa)) is dimerization. The Nuclear localization signal motif lies at 185 to 199 (RKFVAEYFSPRAKQR). A compositionally biased stretch (polar residues) spans 447-459 (GNSGAMSGPAQAQ). 3 disordered regions span residues 447–491 (GNSG…MNGS), 512–591 (NNQN…NTQE), and 611–658 (QQQA…NNLP). Positions 460-471 (MTLSSGTMSGST) are enriched in low complexity. Residues 512 to 524 (NNQNSNTGNQEGF) show a composition bias toward polar residues. Over residues 525 to 543 (SSQNPTLNSNQSPSSSSQQ) the composition is skewed to low complexity. Polar residues-rich tracts occupy residues 544 to 588 (RENL…SHGN), 611 to 636 (QQQA…TSNI), and 645 to 658 (RINS…NNLP).

The protein belongs to the adn1/SEU family.

The protein resides in the nucleus. Probable transcription regulator that functions in the development of the carpel margin meristem similarly to SEUSS (SEU). In association with SEU, supports organ development from meristematic regions by facilitating auxin response and thus organ initiation, and by sustaining meristematic potential through the maintenance of PHABULOSA expression. The chain is Probable transcriptional regulator SLK3 (SLK3) from Arabidopsis thaliana (Mouse-ear cress).